Consider the following 469-residue polypeptide: 3-isopropylmalate dehydratase large subunit (469 aa).

Positions 347, 410, and 413 each coordinate [4Fe-4S] cluster.

This sequence belongs to the aconitase/IPM isomerase family. LeuC type 1 subfamily. In terms of assembly, heterodimer of LeuC and LeuD. It depends on [4Fe-4S] cluster as a cofactor.

The catalysed reaction is (2R,3S)-3-isopropylmalate = (2S)-2-isopropylmalate. The protein operates within amino-acid biosynthesis; L-leucine biosynthesis; L-leucine from 3-methyl-2-oxobutanoate: step 2/4. Catalyzes the isomerization between 2-isopropylmalate and 3-isopropylmalate, via the formation of 2-isopropylmaleate. This chain is 3-isopropylmalate dehydratase large subunit, found in Burkholderia vietnamiensis (strain G4 / LMG 22486) (Burkholderia cepacia (strain R1808)).